The chain runs to 343 residues: 3-hydroxy-3-methylglutaryl-CoA lyase, cytoplasmic (343 aa).

Gly-2 carries N-myristoyl glycine lipidation. Residues 48 to 315 (VKIVEVGPRD…NTGVDLYKVM (268 aa)) enclose the Pyruvate carboxyltransferase domain. Arg-56 provides a ligand contact to substrate. A divalent metal cation-binding residues include Asp-57, His-248, and His-250. Cys-281 is a catalytic residue. Asn-290 contacts a divalent metal cation.

Belongs to the HMG-CoA lyase family. A divalent metal cation serves as cofactor.

The protein localises to the cytoplasm. The protein resides in the cytosol. It is found in the endoplasmic reticulum membrane. The catalysed reaction is (3S)-3-hydroxy-3-methylglutaryl-CoA = acetoacetate + acetyl-CoA. It participates in metabolic intermediate metabolism; (S)-3-hydroxy-3-methylglutaryl-CoA degradation; acetoacetate from (S)-3-hydroxy-3-methylglutaryl-CoA: step 1/1. Functionally, non-mitochondrial 3-hydroxy-3-methylglutaryl-CoA lyase that catalyzes a cation-dependent cleavage of (S)-3-hydroxy-3-methylglutaryl-CoA into acetyl-CoA and acetoacetate, a key step in ketogenesis, the products of which support energy production in nonhepatic animal tissues. In Mus musculus (Mouse), this protein is 3-hydroxy-3-methylglutaryl-CoA lyase, cytoplasmic (Hmgcll1).